The primary structure comprises 122 residues: Large ribosomal subunit protein uL18 (122 aa).

It belongs to the universal ribosomal protein uL18 family. In terms of assembly, part of the 50S ribosomal subunit; part of the 5S rRNA/L5/L18/L25 subcomplex. Contacts the 5S and 23S rRNAs.

Its function is as follows. This is one of the proteins that bind and probably mediate the attachment of the 5S RNA into the large ribosomal subunit, where it forms part of the central protuberance. This Thermotoga petrophila (strain ATCC BAA-488 / DSM 13995 / JCM 10881 / RKU-1) protein is Large ribosomal subunit protein uL18.